A 416-amino-acid polypeptide reads, in one-letter code: Enterobactin exporter EntS (416 aa).

Topologically, residues 1 to 21 (MNKQSWLLNLSLLKTHPAFRA) are cytoplasmic. The helical transmembrane segment at 22-42 (VFLARFISIVSLGLLGVAVPV) threads the bilayer. At 43 to 55 (QIQMMTHSTWQVG) the chain is on the periplasmic side. Residues 56–76 (LSVTLTGGAMFVGLMVGGVLA) form a helical membrane-spanning segment. Topologically, residues 77 to 83 (DRYERKK) are cytoplasmic. A helical transmembrane segment spans residues 84-104 (VILLARGTCGIGFIGLCLNAL). Over 105-109 (LPEPS) the chain is Periplasmic. The chain crosses the membrane as a helical span at residues 110–130 (LLAIYLLGLWDGFFASLGVTA). The Cytoplasmic segment spans residues 131–156 (LLAATPALVGRENLMQAGAITMLTVR). A helical transmembrane segment spans residues 157-177 (LGSVISPMIGGLLLATGGVAW). Residue asparagine 178 is a topological domain, periplasmic. The helical transmembrane segment at 179-199 (YGLAAAGTFITLLPLLSLPAL) threads the bilayer. The Cytoplasmic segment spans residues 200–218 (PPPPQPREHPLKSLLAGFR). The chain crosses the membrane as a helical span at residues 219-239 (FLLASPLVGGIALLGGLLTMA). Residues 240–256 (SAVRVLYPALADNWQMS) lie on the Periplasmic side of the membrane. A helical membrane pass occupies residues 257–277 (AAQIGFLYAAIPLGAAIGALT). Topologically, residues 278-287 (SGKLAHSARP) are cytoplasmic. A helical membrane pass occupies residues 288-307 (GLLMLLSTLGSFLAIGLFGL). Topologically, residues 308 to 313 (MPMWIL) are periplasmic. A helical membrane pass occupies residues 314-336 (GVVCLALFGWLSAVSSLLQYTML). Over 337–356 (QTQTPEAMLGRINGLWTAQN) the chain is Cytoplasmic. The chain crosses the membrane as a helical span at residues 357-377 (VTGDAIGAALLGGLGAMMTPV). Alanine 378 is a topological domain (periplasmic). A helical transmembrane segment spans residues 379–399 (SASASGFGLLIIGVLLLLVLV). At 400-416 (ELRRFRQTPPQVTASDG) the chain is on the cytoplasmic side.

Belongs to the major facilitator superfamily. EntS (TC 2.A.1.38) family.

It is found in the cell inner membrane. Component of an export pathway for enterobactin. The sequence is that of Enterobactin exporter EntS from Escherichia coli O157:H7.